The following is a 201-amino-acid chain: Small ribosomal subunit protein uS4 (201 aa).

The S4 RNA-binding domain maps to Ser91–Glu151.

This sequence belongs to the universal ribosomal protein uS4 family. Part of the 30S ribosomal subunit. Contacts protein S5. The interaction surface between S4 and S5 is involved in control of translational fidelity.

Its function is as follows. One of the primary rRNA binding proteins, it binds directly to 16S rRNA where it nucleates assembly of the body of the 30S subunit. Functionally, with S5 and S12 plays an important role in translational accuracy. This chain is Small ribosomal subunit protein uS4, found in Corynebacterium diphtheriae (strain ATCC 700971 / NCTC 13129 / Biotype gravis).